Reading from the N-terminus, the 365-residue chain is Peptide chain release factor 2 (365 aa).

Glutamine 252 carries the post-translational modification N5-methylglutamine.

Belongs to the prokaryotic/mitochondrial release factor family. Post-translationally, methylated by PrmC. Methylation increases the termination efficiency of RF2.

Its subcellular location is the cytoplasm. Its function is as follows. Peptide chain release factor 2 directs the termination of translation in response to the peptide chain termination codons UGA and UAA. This is Peptide chain release factor 2 from Escherichia coli O9:H4 (strain HS).